The chain runs to 910 residues: Translation factor GUF1 homolog, mitochondrial (910 aa).

Positions 126-188 (RRGNGLPFER…DGGGAPEHPQ (63 aa)) are disordered. One can recognise a tr-type G domain in the interval 189 to 366 (QNVRNFCILA…RIVSDIPCPA (178 aa)). Residues 198–205 (AHIDSGKS), 259–263 (DTPGH), and 313–316 (NKID) each bind GTP. The tract at residues 639–683 (GSGDGRADGSADGSADGSADGSGDSSAHGSSDRRGAGCARGSDDI) is disordered. Positions 646 to 667 (DGSADGSADGSADGSGDSSAHG) are enriched in low complexity.

Belongs to the TRAFAC class translation factor GTPase superfamily. Classic translation factor GTPase family. LepA subfamily.

It localises to the mitochondrion inner membrane. The enzyme catalyses GTP + H2O = GDP + phosphate + H(+). Its function is as follows. Promotes mitochondrial protein synthesis. May act as a fidelity factor of the translation reaction, by catalyzing a one-codon backward translocation of tRNAs on improperly translocated ribosomes. Binds to mitochondrial ribosomes in a GTP-dependent manner. This Plasmodium vivax (strain Salvador I) protein is Translation factor GUF1 homolog, mitochondrial.